The primary structure comprises 1094 residues: Centrosomal protein of 128 kDa (1094 aa).

The segment at 1–29 (MAESSSESDHFRCRDRLSPWAARSTHRGT) is disordered. Residues 7–17 (ESDHFRCRDRL) are compositionally biased toward basic and acidic residues. Serine 31 carries the post-translational modification Phosphoserine. A disordered region spans residues 115 to 140 (DGGTGSELHHFPPTSPLKDYGDPQGI). 2 coiled-coil regions span residues 190-827 (SRSD…QESI) and 879-959 (EELK…IALE). A phosphoserine mark is found at serine 249, serine 291, and serine 331. A disordered region spans residues 319 to 345 (AEGDRKGLQHQVSQISKQQSNYQDEQG). The span at 328 to 342 (HQVSQISKQQSNYQD) shows a compositional bias: polar residues. Residues 987–999 (DSCSSSERTDGRY) are compositionally biased toward basic and acidic residues. The disordered stretch occupies residues 987-1018 (DSCSSSERTDGRYSKYRVRRNSLQHHQDDTKY). Basic residues predominate over residues 1000 to 1009 (SKYRVRRNSL). Residue serine 1061 is modified to Phosphoserine. Residues 1067–1094 (VAPDSASNKEDATMNGTSSQPKKEEYGS) form a disordered region.

The protein localises to the cytoplasm. The protein resides in the cytoskeleton. It localises to the microtubule organizing center. Its subcellular location is the centrosome. It is found in the centriole. The protein localises to the spindle pole. The polypeptide is Centrosomal protein of 128 kDa (CEP128) (Homo sapiens (Human)).